Here is a 559-residue protein sequence, read N- to C-terminus: Potassium-transporting ATPase potassium-binding subunit (559 aa).

A run of 12 helical transmembrane segments spans residues glycine 5–methionine 25, leucine 63–leucine 83, valine 131–leucine 151, isoleucine 173–glycine 193, valine 254–valine 274, alanine 282–glutamate 302, phenylalanine 327–valine 347, alanine 356–valine 376, glycine 379–glycine 399, methionine 416–methionine 436, leucine 483–isoleucine 503, and alanine 525–proline 545.

This sequence belongs to the KdpA family. The system is composed of three essential subunits: KdpA, KdpB and KdpC.

The protein resides in the cell inner membrane. Functionally, part of the high-affinity ATP-driven potassium transport (or Kdp) system, which catalyzes the hydrolysis of ATP coupled with the electrogenic transport of potassium into the cytoplasm. This subunit binds the periplasmic potassium ions and delivers the ions to the membrane domain of KdpB through an intramembrane tunnel. In Klebsiella pneumoniae subsp. pneumoniae (strain ATCC 700721 / MGH 78578), this protein is Potassium-transporting ATPase potassium-binding subunit.